A 315-amino-acid chain; its full sequence is Methionine import ATP-binding protein MetN (315 aa).

The ABC transporter domain occupies 2-219; sequence IEIEKVCVDF…PQHAFTQQLV (218 aa). 16-23 contacts ATP; that stretch reads GTSGAGKS.

It belongs to the ABC transporter superfamily. Methionine importer (TC 3.A.1.24) family. The complex is composed of two ATP-binding proteins (MetN), two transmembrane proteins (MetI) and a solute-binding protein (MetQ).

Its subcellular location is the cell inner membrane. It carries out the reaction L-methionine(out) + ATP + H2O = L-methionine(in) + ADP + phosphate + H(+). It catalyses the reaction D-methionine(out) + ATP + H2O = D-methionine(in) + ADP + phosphate + H(+). In terms of biological role, part of the ABC transporter complex MetNIQ involved in methionine import. Responsible for energy coupling to the transport system. This is Methionine import ATP-binding protein MetN from Salmonella enteritidis.